The following is a 4644-amino-acid chain: Cytoplasmic dynein 1 heavy chain 1 (4644 aa).

An N-acetylserine modification is found at Ser-2. Positions 2–1865 (SEPGGGEDGS…SIQMANAKFN (1864 aa)) are stem. 4 coiled-coil regions span residues 48-69 (AALEAALEEKSALEQMRKFLSD), 179-200 (SVEKKIAELEMGLLHLQQNIEI), 453-476 (AHRKLQARLDQMRKFRRQHEQLRA), and 541-564 (TEAWEAAMKRYDERIDRVETRITA). Ser-68 carries the post-translational modification Phosphoserine. Positions 446 to 701 (MVWRINPAHR…NTQEIFDDWA (256 aa)) are interaction with DYNC1I2. Residues 649–800 (AKQIDRQLTA…EKVEERNTIS (152 aa)) are interaction with DYNC1LI2. Lys-1123 is subject to N6-acetyllysine. Residues 1169 to 1201 (TYVQSLKRKIKQFEKQVELYRNGQRLLEKQRFQ) adopt a coiled-coil conformation. At Ser-1228 the chain carries Phosphoserine. 2 coiled-coil regions span residues 1229-1250 (AIQQQVANLQMKIVQEDRAVES) and 1355-1371 (RKLRQNLDGLLNQLKNF). AAA regions lie at residues 1866-2097 (YGFE…VLVS), 2178-2450 (EELK…LTRL), 2554-2803 (EVET…WVRG), and 2897-3166 (VFYE…GGRT). ATP is bound by residues 1904–1911 (GPAGTGKT) and 2222–2229 (GPSGSGKS). A disordered region spans residues 2388 to 2408 (GEDEAQRRRKGKEDEGEEAAS). ATP is bound by residues 2593–2600 (GPPGSGKT) and 2935–2942 (GVSGAGKT). Coiled coils occupy residues 3187–3273 (EKRS…ADKQ), 3394–3498 (AIAQ…KNQM), and 3735–3798 (EFQL…VSQQ). Residues 3187-3498 (EKRSELEEQQ…KTSETFKNQM (312 aa)) form a stalk region. Lys-3478 is modified (N6-acetyllysine). AAA stretches follow at residues 3551–3780 (LSNA…EVTR) and 4003–4219 (AHMF…TVDT). Phosphoserine is present on Ser-4160. An N6-acetyllysine modification is found at Lys-4281. Residue Thr-4364 is modified to Phosphothreonine. Phosphoserine is present on Ser-4366.

Belongs to the dynein heavy chain family. As to quaternary structure, homodimer. The cytoplasmic dynein 1 complex consists of two catalytic heavy chains (HCs) and a number of non-catalytic subunits presented by intermediate chains (ICs), light intermediate chains (LICs) and light chains (LCs); the composition seems to vary in respect to the IC, LIC and LC composition. The heavy chain homodimer serves as a scaffold for the probable homodimeric assembly of the respective non-catalytic subunits. The ICs and LICs bind directly to the HC dimer and dynein LCs assemble on the IC dimer. Interacts with DYNC1LI1; DYNC1LI1 and DYNC1LI2 bind mutually exclusive to DYNC1H1. Interacts with DYNC1LI2; DYNC1LI1 and DYNC1LI2 bind mutually exclusive to DYNC1H1. Interacts with DYNC1I2. Interacts with BICD2. Interacts with DNALI1.

Its subcellular location is the cytoplasm. It localises to the cytoskeleton. Cytoplasmic dynein 1 acts as a motor for the intracellular retrograde motility of vesicles and organelles along microtubules. Dynein has ATPase activity; the force-producing power stroke is thought to occur on release of ADP. Plays a role in mitotic spindle assembly and metaphase plate congression. This chain is Cytoplasmic dynein 1 heavy chain 1 (Dync1h1), found in Mus musculus (Mouse).